We begin with the raw amino-acid sequence, 242 residues long: Floral homeotic protein AGAMOUS (242 aa).

The MADS-box domain occupies 19 to 73; sequence RGKIEIKRIENTTNRQVTFCKRRNGLLKKAYELSVLCDAEVALIVFSSRGRLYEY. A K-box domain is found at 103-193; sequence AQYYQQEASK…RAKIAETERS (91 aa).

Expressed exclusively in stamens and carpels.

It localises to the nucleus. Probable transcription factor involved in regulating genes that determines stamen and carpel development in wild-type flowers. This is Floral homeotic protein AGAMOUS (AG1) from Petunia hybrida (Petunia).